The following is a 223-amino-acid chain: Probable transaldolase (223 aa).

Residue Lys86 is the Schiff-base intermediate with substrate of the active site.

It belongs to the transaldolase family. Type 3B subfamily.

The protein resides in the cytoplasm. The enzyme catalyses D-sedoheptulose 7-phosphate + D-glyceraldehyde 3-phosphate = D-erythrose 4-phosphate + beta-D-fructose 6-phosphate. Its pathway is carbohydrate degradation; pentose phosphate pathway; D-glyceraldehyde 3-phosphate and beta-D-fructose 6-phosphate from D-ribose 5-phosphate and D-xylulose 5-phosphate (non-oxidative stage): step 2/3. Its function is as follows. Transaldolase is important for the balance of metabolites in the pentose-phosphate pathway. The chain is Probable transaldolase (tal) from Thermoplasma acidophilum (strain ATCC 25905 / DSM 1728 / JCM 9062 / NBRC 15155 / AMRC-C165).